Here is a 30-residue protein sequence, read N- to C-terminus: L-serine dehydratase, alpha chain (30 aa).

Belongs to the iron-sulfur dependent L-serine dehydratase family. In terms of assembly, heterodimer of an alpha chain and a beta chain. It depends on [4Fe-4S] cluster as a cofactor.

The catalysed reaction is L-serine = pyruvate + NH4(+). Its pathway is carbohydrate biosynthesis; gluconeogenesis. In Anaerotignum propionicum (Clostridium propionicum), this protein is L-serine dehydratase, alpha chain.